Consider the following 287-residue polypeptide: MAIRSFRPYTPGTRTRVVTDFSEVTGRKPERSLVVSKHRRKGRNNRGVITCRHRGGGHKRQYRVVDFRRNKHGVPAKVAAIHYDPHRNARLALLFYTDGEKRYILAPAGVTVGQTVISGPDAPIEDGNAMPLSSVPLGSSVHCVELYAGRGGQMVRTAGASAQVMAKEGDYVALKLPSTEVRLVRRECYATLGEVGNSEIRNTSLGKAGRRRWLGRRPQVRGSVMNPCDHPHGGGEGRAPIGRSGPVTPWGKPALGLKTRKRNKPSNKFVLRKRRKTSKRSRGGRDS.

A disordered region spans residues 221–287; the sequence is RGSVMNPCDH…SKRSRGGRDS (67 aa). Positions 258 to 287 are enriched in basic residues; it reads KTRKRNKPSNKFVLRKRRKTSKRSRGGRDS.

This sequence belongs to the universal ribosomal protein uL2 family. As to quaternary structure, part of the 50S ribosomal subunit. Forms a bridge to the 30S subunit in the 70S ribosome.

One of the primary rRNA binding proteins. Required for association of the 30S and 50S subunits to form the 70S ribosome, for tRNA binding and peptide bond formation. It has been suggested to have peptidyltransferase activity; this is somewhat controversial. Makes several contacts with the 16S rRNA in the 70S ribosome. This Synechococcus sp. (strain WH7803) protein is Large ribosomal subunit protein uL2.